Reading from the N-terminus, the 625-residue chain is tRNA uridine 5-carboxymethylaminomethyl modification enzyme MnmG (625 aa).

Residues 13–18, Val125, and Ser182 each bind FAD; that span reads GGGHAG. Position 276–290 (276–290) interacts with NAD(+); sequence GPRYCPSIEDKITRF. Gln373 serves as a coordination point for FAD.

Belongs to the MnmG family. As to quaternary structure, homodimer. Heterotetramer of two MnmE and two MnmG subunits. Requires FAD as cofactor.

It is found in the cytoplasm. Its function is as follows. NAD-binding protein involved in the addition of a carboxymethylaminomethyl (cmnm) group at the wobble position (U34) of certain tRNAs, forming tRNA-cmnm(5)s(2)U34. The protein is tRNA uridine 5-carboxymethylaminomethyl modification enzyme MnmG of Lactococcus lactis subsp. cremoris (strain SK11).